We begin with the raw amino-acid sequence, 418 residues long: MNIIDELAWRDAINQQTNEEGLRELTENTSISLYCGVDPTGDSMHIGHLIPFMMMKRFQLAGHHPYILIGGGTGTIGDPSGRTTERVLQTMEAVQHNVDSLSNQMKKLFGKDAEVTMVNNYDWLSELSLLDFLRDYGKNFNVNTMLAKDIVASRLESGISFTEFTYQILQSIDFYTLHKKHNIQLQIGGADQWGNITAGLDLIRKKEGPEAKVFGLTIPLMLKADGTKFGKTAGGAIWLDPKKTSPFEFYQFWLNQDDRDVIKYLKFFTFLDKEEIDALAEKVEKEPGKREAQRRLAEEVTRFVHDDAALEEAQKISEALFSGNIKDLTIEEIEQGLEHVPTVEITKDAKNIVDWLVDTEIEPSKRQAREDVSGGAISINGDRVTDLDFAVDPTQHFDGKFVVVRKGKKNYFLAKVMD.

An L-tyrosine-binding site is contributed by Tyr34. The 'HIGH' region motif lies at 39 to 48 (PTGDSMHIGH). Tyr166 and Gln170 together coordinate L-tyrosine. The 'KMSKS' region motif lies at 228-232 (KFGKT). Lys231 contacts ATP. Residues 350–416 (KNIVDWLVDT…GKKNYFLAKV (67 aa)) form the S4 RNA-binding domain.

The protein belongs to the class-I aminoacyl-tRNA synthetase family. TyrS type 1 subfamily. In terms of assembly, homodimer.

Its subcellular location is the cytoplasm. The catalysed reaction is tRNA(Tyr) + L-tyrosine + ATP = L-tyrosyl-tRNA(Tyr) + AMP + diphosphate + H(+). Functionally, catalyzes the attachment of tyrosine to tRNA(Tyr) in a two-step reaction: tyrosine is first activated by ATP to form Tyr-AMP and then transferred to the acceptor end of tRNA(Tyr). This chain is Tyrosine--tRNA ligase 1, found in Enterococcus faecalis (strain ATCC 700802 / V583).